A 96-amino-acid polypeptide reads, in one-letter code: YcgL domain-containing protein VS_0884 (96 aa).

Residues 1–84 (MLCSIYKSSK…PPVNELELHK (84 aa)) form the YcgL domain.

The polypeptide is YcgL domain-containing protein VS_0884 (Vibrio atlanticus (strain LGP32) (Vibrio splendidus (strain Mel32))).